Consider the following 82-residue polypeptide: Cytochrome b559 subunit alpha (82 aa).

The chain crosses the membrane as a helical span at residues 22–36 (VIHFVTLPSIFLAGF). Histidine 24 is a heme binding site.

It belongs to the PsbE/PsbF family. In terms of assembly, heterodimer of an alpha subunit and a beta subunit. PSII is composed of 1 copy each of membrane proteins PsbA, PsbB, PsbC, PsbD, PsbE, PsbF, PsbH, PsbI, PsbJ, PsbK, PsbL, PsbM, PsbT, PsbX, PsbY, PsbZ, Psb30/Ycf12, peripheral proteins PsbO, CyanoQ (PsbQ), PsbU, PsbV and a large number of cofactors. It forms dimeric complexes. The cofactor is heme b.

Its subcellular location is the cellular thylakoid membrane. In terms of biological role, this b-type cytochrome is tightly associated with the reaction center of photosystem II (PSII). PSII is a light-driven water:plastoquinone oxidoreductase that uses light energy to abstract electrons from H(2)O, generating O(2) and a proton gradient subsequently used for ATP formation. It consists of a core antenna complex that captures photons, and an electron transfer chain that converts photonic excitation into a charge separation. The polypeptide is Cytochrome b559 subunit alpha (Parasynechococcus marenigrum (strain WH8102)).